Here is a 228-residue protein sequence, read N- to C-terminus: uncharacterized protein (228 aa).

6 helical membrane passes run 14-34 (GWYI…MWLI), 53-73 (FLII…VLIV), 108-128 (GLTF…FFWL), 148-168 (AVKM…PIFF), 178-198 (TIIS…GFSI), and 200-220 (SVVY…YMAI).

The protein resides in the cell membrane. This is an uncharacterized protein from Bacillus subtilis (strain 168).